Consider the following 494-residue polypeptide: uncharacterized protein (494 aa).

This is an uncharacterized protein from Magallana gigas (Pacific oyster).